The primary structure comprises 262 residues: Ribosomal RNA small subunit methyltransferase G (262 aa).

The S-adenosyl-L-methionine site is built by glycine 72, leucine 77, and arginine 142. The interval 212–262 (RSSQLSRAEGRKGRGDGERHDGRQVRRTARDSRRSREVDRDQPTRGQSRST) is disordered. The span at 219-254 (AEGRKGRGDGERHDGRQVRRTARDSRRSREVDRDQP) shows a compositional bias: basic and acidic residues.

Belongs to the methyltransferase superfamily. RNA methyltransferase RsmG family.

It localises to the cytoplasm. Its function is as follows. Specifically methylates the N7 position of guanine in position 518 of 16S rRNA. This is Ribosomal RNA small subunit methyltransferase G from Frankia alni (strain DSM 45986 / CECT 9034 / ACN14a).